The chain runs to 425 residues: Monoacylglycerol lipase ABHD2 (425 aa).

Topologically, residues 1–9 (MNAMLETPE) are cytoplasmic. The helical; Signal-anchor for type II membrane protein transmembrane segment at 10-30 (LPAVFDGVKLAAVAAVLYVIV) threads the bilayer. Residues 31–425 (RCLNLKSPTA…DTEQMEAELE (395 aa)) are Extracellular-facing. The AB hydrolase-1 domain occupies 128–382 (MVICPGIANH…HGGHLGFFEG (255 aa)). The N-linked (GlcNAc...) asparagine glycan is linked to asparagine 136. The active-site Nucleophile is the serine 207. Residues aspartate 345 and histidine 376 each act as charge relay system in the active site. An N-linked (GlcNAc...) asparagine glycan is attached at asparagine 410.

The protein belongs to the AB hydrolase superfamily. AB hydrolase 4 family. Widely expressed with higher expression in testis. Expressed by vascular smooth muscle cells, non vascular smooth muscle cells and heart.

It is found in the cell membrane. It localises to the cytoplasmic vesicle. Its subcellular location is the secretory vesicle. The protein resides in the acrosome membrane. It catalyses the reaction Hydrolyzes glycerol monoesters of long-chain fatty acids.. The enzyme catalyses an acetyl ester + H2O = an aliphatic alcohol + acetate + H(+). The catalysed reaction is a triacylglycerol + H2O = a diacylglycerol + a fatty acid + H(+). It carries out the reaction 2-(5Z,8Z,11Z,14Z-eicosatetraenoyl)-glycerol + H2O = glycerol + (5Z,8Z,11Z,14Z)-eicosatetraenoate + H(+). It catalyses the reaction a butanoate ester + H2O = an aliphatic alcohol + butanoate + H(+). The enzyme catalyses hexadecanoate ester + H2O = an aliphatic alcohol + hexadecanoate + H(+). Its activity is regulated as follows. Acylglycerol lipase activity is activated upon binding to progesterone. Progesterone-dependent acylglycerol lipase that catalyzes hydrolysis of endocannabinoid arachidonoylglycerol (AG) from cell membrane. Acts as a progesterone receptor: progesterone-binding activates the acylglycerol lipase activity, mediating degradation of 1-arachidonoylglycerol (1AG) and 2-arachidonoylglycerol (2AG) to glycerol and arachidonic acid (AA). Also displays an ester hydrolase activity against acetyl ester, butanoate ester and hexadecanoate ester. Plays a key role in sperm capacitation in response to progesterone by mediating degradation of 2AG, an inhibitor of the sperm calcium channel CatSper, leading to calcium influx via CatSper and sperm activation. Involved in acrosomal reaction. May also play a role in smooth muscle cells migration. In Mus musculus (Mouse), this protein is Monoacylglycerol lipase ABHD2 (Abhd2).